The chain runs to 502 residues: Zinc finger protein 3 homolog (502 aa).

Basic and acidic residues-rich tracts occupy residues 1–13 (MGTE…PKEE) and 80–93 (PSSE…ESER). 2 disordered regions span residues 1–26 (MGTE…SLLE) and 47–103 (LEGH…NLVT). Residues lysine 6 and lysine 11 each participate in a glycyl lysine isopeptide (Lys-Gly) (interchain with G-Cter in SUMO2) cross-link. C2H2-type zinc fingers lie at residues 141-163 (HTCK…MRVH), 169-191 (FECK…LRIH), 197-219 (FACN…HRIH), 225-247 (YKCE…QRIH), 253-275 (YECN…QRIH), 281-303 (HECN…QKIH), 309-331 (YLCN…QRIH), 337-359 (YECN…IRIH), 365-387 (YVCK…ERIH), 393-415 (YECF…QRIH), 421-443 (HQCN…QKIH), 449-471 (YECS…QRIH), and 477-499 (YECQ…QSVH).

This sequence belongs to the krueppel C2H2-type zinc-finger protein family.

It is found in the nucleus. Its function is as follows. May be involved in transcriptional regulation. This is Zinc finger protein 3 homolog (ZFP3) from Homo sapiens (Human).